The sequence spans 306 residues: N-acetylmuramic acid 6-phosphate etherase (306 aa).

Residues 62–225 (IAQAFQNGGR…TTASMIRIGK (164 aa)) enclose the SIS domain. Glu-90 functions as the Proton donor in the catalytic mechanism. Glu-121 is an active-site residue.

The protein belongs to the GCKR-like family. MurNAc-6-P etherase subfamily. In terms of assembly, homodimer.

The catalysed reaction is N-acetyl-D-muramate 6-phosphate + H2O = N-acetyl-D-glucosamine 6-phosphate + (R)-lactate. The protein operates within amino-sugar metabolism; 1,6-anhydro-N-acetylmuramate degradation. It functions in the pathway amino-sugar metabolism; N-acetylmuramate degradation. It participates in cell wall biogenesis; peptidoglycan recycling. Specifically catalyzes the cleavage of the D-lactyl ether substituent of MurNAc 6-phosphate, producing GlcNAc 6-phosphate and D-lactate. Together with AnmK, is also required for the utilization of anhydro-N-acetylmuramic acid (anhMurNAc) either imported from the medium or derived from its own cell wall murein, and thus plays a role in cell wall recycling. The chain is N-acetylmuramic acid 6-phosphate etherase from Vibrio atlanticus (strain LGP32) (Vibrio splendidus (strain Mel32)).